Consider the following 283-residue polypeptide: Pantothenate synthetase (283 aa).

30-37 (MGCLHEGH) lines the ATP pocket. His-37 serves as the catalytic Proton donor. A (R)-pantoate-binding site is contributed by Gln-61. Position 61 (Gln-61) interacts with beta-alanine. 147-150 (GQKD) is a binding site for ATP. Gln-153 contacts (R)-pantoate. ATP is bound by residues Val-176 and 184-187 (KSSR).

Belongs to the pantothenate synthetase family. Homodimer.

The protein resides in the cytoplasm. The enzyme catalyses (R)-pantoate + beta-alanine + ATP = (R)-pantothenate + AMP + diphosphate + H(+). It functions in the pathway cofactor biosynthesis; (R)-pantothenate biosynthesis; (R)-pantothenate from (R)-pantoate and beta-alanine: step 1/1. Functionally, catalyzes the condensation of pantoate with beta-alanine in an ATP-dependent reaction via a pantoyl-adenylate intermediate. This is Pantothenate synthetase from Clostridium novyi (strain NT).